The primary structure comprises 435 residues: MSVPPFTIRPAAPRLDGPTGPVAVAPGVHWVGALDPGLRNFDVILKTANGTTYNAYAVRGSEGVAVIDTVKAEFAGDFFARLEAVARYDEIRLIVLNHLEPDHTGAVPELLRRAPQAQVRLSPRGLPMLRALLKDDFERYDIKGVTTGQSVSLGDRICSFFTTPFVHWPDTQCTWLAAERVLFTCDLFGSHYCDGRLFNDLVGDFRFSFEYYFDRIMRPFRSFVAQVLDLIEPLDFGIIAPAHGPILRSHPRDYLTHTRRLISSWLAAETGSEKTLLIFYVSAYRATAQLAQAIHDGAAESPDVRVSLFDLEGGEITPFLDLIEEADGIALGTPTINGDAVRTIWEMLAALVDIETRGKLGAAFGSYGWSGEAVRLVETRLQGLKMRLPEPGLRVKLHPSAAELEEGRAFGRRLADHLTGRARPREVDFAEIAAR.

Residues Ala-48–Leu-228 are zinc metallo-hydrolase. Fe cation is bound by residues His-98, Glu-100, Asp-102, His-167, Asp-186, and His-243. The region spanning Leu-276–Ala-415 is the Flavodoxin-like domain.

It in the N-terminal section; belongs to the zinc metallo-hydrolase group 3 family. As to quaternary structure, homodimer. The cofactor is FMN. Fe cation serves as cofactor.

In terms of biological role, low-potential electron donor to a number of redox enzymes. In Rhodobacter capsulatus (Rhodopseudomonas capsulata), this protein is Type A flavoprotein fprA (fprA).